Here is a 349-residue protein sequence, read N- to C-terminus: Two pore potassium channel b (349 aa).

Positions Met1 to Pro53 are disordered. Topologically, residues Met1 to Arg66 are cytoplasmic. The chain crosses the membrane as a helical span at residues Leu67–Met87. The segment at residues Asp100 to Pro119 is an intramembrane region (pore-forming). Residues Ala123 to Leu143 traverse the membrane as a helical segment. The Cytoplasmic segment spans residues Ser144–Leu180. Residues Tyr181–Val201 traverse the membrane as a helical segment. The pore-forming intramembrane region spans Asp208–Phe227. The chain crosses the membrane as a helical span at residues Ala234–Ala254. At Ala255 to Arg349 the chain is on the cytoplasmic side. 2 EF-hand domains span residues Leu271–Lys306 and Glu310–Pro345. Ca(2+) contacts are provided by Asp284, Asp286, Asp288, Arg290, Asp295, Asp323, Asp325, Ser327, Thr329, and Asp334. Residues His326–Arg349 are disordered.

This sequence belongs to the two pore domain potassium channel (TC 1.A.1.7) family. As to quaternary structure, homodimer.

The protein localises to the vacuole membrane. Highly selective inward-rectifying potassium channel that is specifically located in the tonoplast of protein storage vacuoles. Functions independently of the voltage difference across the membrane. The sequence is that of Two pore potassium channel b (TPKB) from Oryza sativa subsp. japonica (Rice).